The chain runs to 483 residues: UDP-N-acetylmuramyl-tripeptide synthetase (483 aa).

Ser-43 contacts UDP-N-acetyl-alpha-D-muramoyl-L-alanyl-D-glutamate. 116–122 (GTKGKTT) is a binding site for ATP. UDP-N-acetyl-alpha-D-muramoyl-L-alanyl-D-glutamate contacts are provided by residues 160–161 (TT), Ser-187, and Arg-195. Lys-229 is subject to N6-carboxylysine.

It belongs to the MurCDEF family. MurE subfamily. Carboxylation is probably crucial for Mg(2+) binding and, consequently, for the gamma-phosphate positioning of ATP.

It localises to the cytoplasm. It participates in cell wall biogenesis; peptidoglycan biosynthesis. In terms of biological role, catalyzes the addition of an amino acid to the nucleotide precursor UDP-N-acetylmuramoyl-L-alanyl-D-glutamate (UMAG) in the biosynthesis of bacterial cell-wall peptidoglycan. This chain is UDP-N-acetylmuramyl-tripeptide synthetase, found in Lactococcus lactis subsp. cremoris (strain MG1363).